The chain runs to 151 residues: uncharacterized protein (151 aa).

3 helical membrane passes run 12–32, 59–79, and 114–134; these read LAYFIDGIIVSVPSYIILFII, LAFLPTMLIMIVISVLYYGLL, and YFAYILSGIIFYIGFIMIAFG.

Its subcellular location is the cell membrane. This is an uncharacterized protein from Bacillus subtilis (strain 168).